We begin with the raw amino-acid sequence, 397 residues long: Odorant receptor 98a (397 aa).

The Cytoplasmic portion of the chain corresponds to M1–Y43. The chain crosses the membrane as a helical span at residues Y44–I64. The Extracellular portion of the chain corresponds to S65–E77. The helical transmembrane segment at L78–F98 threads the bilayer. Topologically, residues N99–A138 are cytoplasmic. A helical membrane pass occupies residues Y139–L159. At S160–M192 the chain is on the extracellular side. N-linked (GlcNAc...) asparagine glycosylation occurs at N187. A helical transmembrane segment spans residues L193–L213. Topologically, residues R214 to T266 are cytoplasmic. The helical transmembrane segment at I267–F287 threads the bilayer. Over F288–T293 the chain is Extracellular. Residues G294–V314 form a helical membrane-spanning segment. Topologically, residues C315–K354 are cytoplasmic. The helical transmembrane segment at S355–A375 threads the bilayer. At K376–N397 the chain is on the extracellular side.

The protein belongs to the insect chemoreceptor superfamily. Heteromeric odorant receptor channel (TC 1.A.69) family. Or2a subfamily. As to quaternary structure, interacts with Orco. Complexes exist early in the endomembrane system in olfactory sensory neurons (OSNs), coupling these complexes to the conserved ciliary trafficking pathway. As to expression, expressed in olfactory sensory neurons in the antenna.

The protein resides in the cell membrane. Odorant receptor which mediates acceptance or avoidance behavior, depending on its substrates. The odorant receptor repertoire encodes a large collection of odor stimuli that vary widely in identity, intensity, and duration. May form a complex with Orco to form odorant-sensing units, providing sensitive and prolonged odorant signaling and calcium permeability. This is Odorant receptor 98a (Or98a) from Drosophila melanogaster (Fruit fly).